We begin with the raw amino-acid sequence, 467 residues long: Cytochrome P450 76A1 (467 aa).

Heme is bound at residue cysteine 410.

It belongs to the cytochrome P450 family. It depends on heme as a cofactor.

This is Cytochrome P450 76A1 (CYP76A1) from Solanum melongena (Eggplant).